We begin with the raw amino-acid sequence, 295 residues long: GATA zinc finger domain-containing protein 23 (295 aa).

Residues 115–126 are compositionally biased toward low complexity; the sequence is ASTSKTATSKNV. The segment at 115–240 is disordered; sequence ASTSKTATSK…KRGRPSKIQP (126 aa). The span at 127–145 shows a compositional bias: polar residues; the sequence is ISNIENNTNKSQPLESNDL. Residues 146–163 are compositionally biased toward low complexity; that stretch reads TPPSSKSSNSSPSTSPSK. Basic residues predominate over residues 164–174; sequence RVSKSKTRVTK. Positions 181–227 are enriched in low complexity; that stretch reads STSSSGETENLTTTSTADTTATTDTADTTDGTNTRTSNTSSDDTTTE. Residues 229–241 constitute a DNA-binding region (a.T hook); it reads TKKRGRPSKIQPD. The GATA-type zinc-finger motif lies at 243–270; that stretch reads CYVCRRTFTSYWRKGIFNDQNEDLCNPC.

This is GATA zinc finger domain-containing protein 23 (gtaW) from Dictyostelium discoideum (Social amoeba).